The chain runs to 832 residues: pre-rRNA 2'-O-ribose RNA methyltransferase FTSJ3 (832 aa).

5 residues coordinate S-adenosyl-L-methionine: Gly56, Trp58, Asp76, Asp92, and Asp117. Residue Lys157 is the Proton acceptor of the active site. Disordered stretches follow at residues 332-358 (INLS…ADEM), 485-523 (RLER…LEEK), and 546-631 (DADE…GLVE). 2 stretches are compositionally biased toward basic and acidic residues: residues 345-358 (EEEK…ADEM) and 485-495 (RLERERREQGV). Positions 503-514 (EEEEEEEEEEEN) are enriched in acidic residues. Over residues 570–579 (KTKKKGQKKK) the composition is skewed to basic residues. The span at 600–618 (AEAEAEQSSDDDSSSDEEG) shows a compositional bias: acidic residues. Positions 726 to 758 (IKKVAEAKARKKRRMLKKMEQMKKKAEAVVSTV) form a coiled coil. The interval 795-832 (GPRVRRPPGVKGQFKVVDSRLKKDVRAQKRKEQKKRRK) is disordered. A compositionally biased stretch (basic and acidic residues) spans 811 to 821 (VDSRLKKDVRA). The span at 822 to 832 (QKRKEQKKRRK) shows a compositional bias: basic residues.

Belongs to the class I-like SAM-binding methyltransferase superfamily. RNA methyltransferase RlmE family. SPB1 subfamily. As to quaternary structure, interacts with NIP7.

Its subcellular location is the nucleus. The protein localises to the nucleolus. The enzyme catalyses a ribonucleotide in rRNA + S-adenosyl-L-methionine = a 2'-O-methylribonucleotide in rRNA + S-adenosyl-L-homocysteine + H(+). In terms of biological role, RNA 2'-O-methyltransferase involved in the processing of the 34S pre-rRNA to 18S rRNA and in 40S ribosomal subunit formation. The sequence is that of pre-rRNA 2'-O-ribose RNA methyltransferase FTSJ3 from Gallus gallus (Chicken).